The following is a 20-amino-acid chain: Pregnancy-associated glycoprotein 75 (20 aa).

The protein belongs to the peptidase A1 family. Post-translationally, N-glycosylated. In terms of tissue distribution, expressed in chorionic epithelium (trophectoderm).

Its subcellular location is the secreted. This Bubalus bubalis (Domestic water buffalo) protein is Pregnancy-associated glycoprotein 75.